A 123-amino-acid chain; its full sequence is Small ribosomal subunit protein uS13 (123 aa).

The disordered stretch occupies residues 103–123 (TRTNARTRKGPKKTVGVRRKK). Over residues 105–123 (TNARTRKGPKKTVGVRRKK) the composition is skewed to basic residues.

It belongs to the universal ribosomal protein uS13 family. Part of the 30S ribosomal subunit. Forms a loose heterodimer with protein S19. Forms two bridges to the 50S subunit in the 70S ribosome.

Functionally, located at the top of the head of the 30S subunit, it contacts several helices of the 16S rRNA. In the 70S ribosome it contacts the 23S rRNA (bridge B1a) and protein L5 of the 50S subunit (bridge B1b), connecting the 2 subunits; these bridges are implicated in subunit movement. Contacts the tRNAs in the A and P-sites. In Desulforudis audaxviator (strain MP104C), this protein is Small ribosomal subunit protein uS13.